The chain runs to 505 residues: Maturase K (505 aa).

The protein belongs to the intron maturase 2 family. MatK subfamily.

It localises to the plastid. The protein localises to the chloroplast. Functionally, usually encoded in the trnK tRNA gene intron. Probably assists in splicing its own and other chloroplast group II introns. The polypeptide is Maturase K (Rosa stellata (Star rose)).